We begin with the raw amino-acid sequence, 1031 residues long: Ookinete maturation protein 1 (1031 aa).

Disordered regions lie at residues 125 to 184, 340 to 405, and 609 to 697; these read HNEN…PELE, KEAE…DGMR, and DAEL…NDSI. The span at 141–168 shows a compositional bias: basic residues; it reads QKLKKKKKIKKGTKKKSINKISILKHKS. Over residues 171 to 180 the composition is skewed to polar residues; the sequence is SFPSTQNENT. Positions 340-357 are enriched in basic and acidic residues; sequence KEAEEEERKKNEDEHILE. Residues 377 to 394 show a composition bias toward polar residues; it reads LGKSFKNNESFELNSPQK. Residues 581–646 are a coiled coil; the sequence is IDEENSVFVE…ETQMAGKEEK (66 aa). A compositionally biased stretch (basic and acidic residues) spans 610–648; the sequence is AELRKDEEEDKSKNNEKDSKSEERDILETQMAGKEEKPV. The segment covering 649–659 has biased composition (basic residues); that stretch reads LKKKKKNKGKQ. Positions 660–686 are enriched in basic and acidic residues; sequence RNREGKGVVEKGYDAKREKKENEEKNK.

In terms of biological role, in the mosquito vector midgut, plays a role in ookinete development. This is Ookinete maturation protein 1 from Plasmodium berghei (strain Anka).